We begin with the raw amino-acid sequence, 420 residues long: L-cysteine:1D-myo-inositol 2-amino-2-deoxy-alpha-D-glucopyranoside ligase (420 aa).

Residue cysteine 43 coordinates Zn(2+). L-cysteinyl-5'-AMP contacts are provided by residues 43 to 46 (CGIT), threonine 58, and 81 to 83 (NIT). The short motif at 45-55 (ITPYDATHLGH) is the 'HIGH' region element. Residues 187 to 192 (ERGGDP) carry the 'ERGGDP' region motif. Position 227 (tryptophan 227) interacts with L-cysteinyl-5'-AMP. Residue cysteine 231 coordinates Zn(2+). 249-251 (GSD) contributes to the L-cysteinyl-5'-AMP binding site. Residue histidine 256 participates in Zn(2+) binding. Isoleucine 289 provides a ligand contact to L-cysteinyl-5'-AMP. Residues 295–299 (KMSKS) carry the 'KMSKS' region motif.

Belongs to the class-I aminoacyl-tRNA synthetase family. MshC subfamily. As to quaternary structure, monomer. Zn(2+) serves as cofactor.

It carries out the reaction 1D-myo-inositol 2-amino-2-deoxy-alpha-D-glucopyranoside + L-cysteine + ATP = 1D-myo-inositol 2-(L-cysteinylamino)-2-deoxy-alpha-D-glucopyranoside + AMP + diphosphate + H(+). Catalyzes the ATP-dependent condensation of GlcN-Ins and L-cysteine to form L-Cys-GlcN-Ins. In Segniliparus rotundus (strain ATCC BAA-972 / CDC 1076 / CIP 108378 / DSM 44985 / JCM 13578), this protein is L-cysteine:1D-myo-inositol 2-amino-2-deoxy-alpha-D-glucopyranoside ligase.